We begin with the raw amino-acid sequence, 353 residues long: Aliphatic aldoxime dehydratase (353 aa).

S219 lines the an aliphatic aldoxime pocket. Heme b is bound at residue H299. H320 contacts an aliphatic aldoxime. H320 is an active-site residue.

This sequence belongs to the heme-containing dehydratase family. Homodimer. Heme b serves as cofactor.

It catalyses the reaction an aliphatic aldoxime = a nitrile + H2O. With respect to regulation, active when the heme iron is in the ferrous state. Activated by FMN, Fe(2+), Sn(2+), Na(2)SO(3), Na(2)S and vitamin K3. Catalyzes the dehydration of aldoximes to their corresponding nitrile. Is active toward various arylalkyl- and alkyl-aldoximes, and to a lesser extent toward aryl-aldoximes. The protein is Aliphatic aldoxime dehydratase of Rhodococcus globerulus.